The primary structure comprises 767 residues: Slo-interacting protein 1 (767 aa).

Residues 202–280 (QQSSTDTNKG…SVTLLVSRIL (79 aa)) form the PDZ domain. Disordered stretches follow at residues 521-557 (GNAA…NPDE) and 744-767 (KEER…QQQQ). The segment covering 532–555 (NSSSAYNTGDSNNSASPHQNTTNP) has biased composition (polar residues). Basic and acidic residues predominate over residues 744 to 755 (KEERKRHIERAR).

In terms of assembly, interacts with Slo. As to expression, in embryos, it is expressed throughout the CNS and in several peripheral locations. Colocalizes with Slo.

Functionally, may selectively reduce calcium-activated potassium channel (Slo) currents by reducing the number of Slo channels in the plasma membrane. This Drosophila melanogaster (Fruit fly) protein is Slo-interacting protein 1 (Slip1).